Reading from the N-terminus, the 309-residue chain is p-hydroxybenzoic acid efflux pump subunit AaeA (309 aa).

The chain crosses the membrane as a helical span at residues Ala-12–Tyr-32.

It belongs to the membrane fusion protein (MFP) (TC 8.A.1) family.

The protein localises to the cell inner membrane. In terms of biological role, forms an efflux pump with AaeB. The sequence is that of p-hydroxybenzoic acid efflux pump subunit AaeA from Escherichia coli O157:H7.